A 513-amino-acid chain; its full sequence is 2-isopropylmalate synthase (513 aa).

The Pyruvate carboxyltransferase domain occupies 5-267 (LVIFDTTLRD…ETRIDTTQIV (263 aa)). Residues D14, H202, H204, and N238 each coordinate Mn(2+). Residues 393–513 (KLVYSRVCSE…LDKVKAQGGV (121 aa)) are regulatory domain.

Belongs to the alpha-IPM synthase/homocitrate synthase family. LeuA type 1 subfamily. In terms of assembly, homodimer. The cofactor is Mn(2+).

The protein localises to the cytoplasm. It catalyses the reaction 3-methyl-2-oxobutanoate + acetyl-CoA + H2O = (2S)-2-isopropylmalate + CoA + H(+). It functions in the pathway amino-acid biosynthesis; L-leucine biosynthesis; L-leucine from 3-methyl-2-oxobutanoate: step 1/4. Functionally, catalyzes the condensation of the acetyl group of acetyl-CoA with 3-methyl-2-oxobutanoate (2-ketoisovalerate) to form 3-carboxy-3-hydroxy-4-methylpentanoate (2-isopropylmalate). In Dechloromonas aromatica (strain RCB), this protein is 2-isopropylmalate synthase.